A 267-amino-acid chain; its full sequence is Small ribosomal subunit protein uS3 (267 aa).

Residues 43–111 (IRKAMSKDLE…QVQLNIFEVK (69 aa)) form the KH type-2 domain. The tract at residues 216–267 (FEEQQAQQSNNRQGRRGDRRPRRGQRNAAPQQNAAAEAPAAAEAPAATETKE) is disordered. The span at 228–240 (QGRRGDRRPRRGQ) shows a compositional bias: basic residues. Positions 241–267 (RNAAPQQNAAAEAPAAAEAPAATETKE) are enriched in low complexity.

Belongs to the universal ribosomal protein uS3 family. As to quaternary structure, part of the 30S ribosomal subunit. Forms a tight complex with proteins S10 and S14.

Its function is as follows. Binds the lower part of the 30S subunit head. Binds mRNA in the 70S ribosome, positioning it for translation. This chain is Small ribosomal subunit protein uS3, found in Bifidobacterium adolescentis (strain ATCC 15703 / DSM 20083 / NCTC 11814 / E194a).